The sequence spans 124 residues: Glutaredoxin-2 (124 aa).

Residues Cys-13 and Cys-16 are joined by a disulfide bond.

Belongs to the glutaredoxin family. As to quaternary structure, homodimer.

It is found in the host cytoplasm. In terms of biological role, glutaredoxin necessary for virion morphogenesis and virus replication. Functions as a thiol-disulfide transfer protein between membrane-associated OPG128 and substrates OPG095 or OPG053. The complete pathway for formation of disulfide bonds in intracellular virion membrane proteins sequentially involves oxidation of OPG072, OPG128 and OPG088. Exhibit thioltransferase and dehydroascorbate reductase activities in vitro. The chain is Glutaredoxin-2 (OPG088) from Homo sapiens (Human).